We begin with the raw amino-acid sequence, 109 residues long: Small ribosomal subunit protein eS25 (109 aa).

Basic and acidic residues predominate over residues 1-13; the sequence is MVKKIQESKEKKA. The disordered stretch occupies residues 1 to 34; sequence MVKKIQESKEKKALKAASGTRKDKKKWGDGRKKE.

The protein belongs to the eukaryotic ribosomal protein eS25 family.

This chain is Small ribosomal subunit protein eS25 (RPS25-1), found in Encephalitozoon cuniculi (strain GB-M1) (Microsporidian parasite).